A 359-amino-acid chain; its full sequence is Peptide chain release factor 1 (359 aa).

Glutamine 233 is subject to N5-methylglutamine.

This sequence belongs to the prokaryotic/mitochondrial release factor family. Post-translationally, methylated by PrmC. Methylation increases the termination efficiency of RF1.

The protein localises to the cytoplasm. Functionally, peptide chain release factor 1 directs the termination of translation in response to the peptide chain termination codons UAG and UAA. The protein is Peptide chain release factor 1 of Ruminiclostridium cellulolyticum (strain ATCC 35319 / DSM 5812 / JCM 6584 / H10) (Clostridium cellulolyticum).